A 40-amino-acid chain; its full sequence is Photosystem II reaction center protein J (40 aa).

Residues 8-28 (IPLWLIGTVAGILIIGLLGVF) traverse the membrane as a helical segment.

The protein belongs to the PsbJ family. As to quaternary structure, PSII is composed of 1 copy each of membrane proteins PsbA, PsbB, PsbC, PsbD, PsbE, PsbF, PsbH, PsbI, PsbJ, PsbK, PsbL, PsbM, PsbT, PsbX, PsbY, PsbZ, Psb30/Ycf12, at least 3 peripheral proteins of the oxygen-evolving complex and a large number of cofactors. It forms dimeric complexes.

It localises to the plastid. The protein resides in the chloroplast thylakoid membrane. Its function is as follows. One of the components of the core complex of photosystem II (PSII). PSII is a light-driven water:plastoquinone oxidoreductase that uses light energy to abstract electrons from H(2)O, generating O(2) and a proton gradient subsequently used for ATP formation. It consists of a core antenna complex that captures photons, and an electron transfer chain that converts photonic excitation into a charge separation. The polypeptide is Photosystem II reaction center protein J (Nandina domestica (Heavenly bamboo)).